A 191-amino-acid chain; its full sequence is 3-isopropylmalate dehydratase small subunit (191 aa).

This sequence belongs to the LeuD family. LeuD type 1 subfamily. Heterodimer of LeuC and LeuD.

The catalysed reaction is (2R,3S)-3-isopropylmalate = (2S)-2-isopropylmalate. Its pathway is amino-acid biosynthesis; L-leucine biosynthesis; L-leucine from 3-methyl-2-oxobutanoate: step 2/4. Its function is as follows. Catalyzes the isomerization between 2-isopropylmalate and 3-isopropylmalate, via the formation of 2-isopropylmaleate. The protein is 3-isopropylmalate dehydratase small subunit of Staphylococcus saprophyticus subsp. saprophyticus (strain ATCC 15305 / DSM 20229 / NCIMB 8711 / NCTC 7292 / S-41).